The following is a 78-amino-acid chain: Small ribosomal subunit protein bS20 (78 aa).

This sequence belongs to the bacterial ribosomal protein bS20 family.

Binds directly to 16S ribosomal RNA. The sequence is that of Small ribosomal subunit protein bS20 from Streptococcus pneumoniae serotype 19F (strain G54).